A 154-amino-acid chain; its full sequence is 3-hydroxyacyl-[acyl-carrier-protein] dehydratase FabZ (154 aa).

Residue histidine 60 is part of the active site.

The protein belongs to the thioester dehydratase family. FabZ subfamily.

Its subcellular location is the cytoplasm. The catalysed reaction is a (3R)-hydroxyacyl-[ACP] = a (2E)-enoyl-[ACP] + H2O. Functionally, involved in unsaturated fatty acids biosynthesis. Catalyzes the dehydration of short chain beta-hydroxyacyl-ACPs and long chain saturated and unsaturated beta-hydroxyacyl-ACPs. The polypeptide is 3-hydroxyacyl-[acyl-carrier-protein] dehydratase FabZ (Synechococcus sp. (strain CC9311)).